The sequence spans 602 residues: MPSDRQKKIRNFSIIAHIDHGKSTLADRLIEYTGLISQREMQSQMLDNMDLERERGITIKLQTIRLVYKAKDGEEYYLNLIDTPGHVDFTYEVSRSLAACEGAVLIVDAAQGIEAQTLANVYLALEQDLEIIPVINKIDLPSARPDEIKTEIEDIIGLDASEAPLISAKEGLNIEDVLESIVKNVPSPKGDINAPLKALIFDSYYDSYKGVIAYMRVMEGQVKKGMKVKMMATNKEFEVVEVGAFSPGAIPLDSLSAGDVGYLAASIKDVRHCRVGDTITDALNPTESPLPGYRKVNPMVYCGIYPAEGEKYEDIRDALEKLQVNDAALVFEPESSAALGFGFRCGFLGLLHMEIIQERLEREFDLDLITTAPSVIYKITKTNGEELMIQNPANMPTPQEIRIMEEPIVKTTIMVPNTYVGAVMELCQDRRGEMKDMQYIDDTRVNLYYEMPLNEVIYDFFDALKSKTKGYGSLDYELLGYRASDLVKLDILINGEQIDALSFIVHESKAYSRGKGMCEKLKDEIPRHQFPIPLQAAVGNKVISRETIKALRKDVLAKCYGGDISRKKKLLEKQKEGKKRMRQVGNVEVPQKAFMSVLKLDN.

Residues K7–K189 enclose the tr-type G domain. GTP is bound by residues D19 to T24 and N136 to D139.

It belongs to the TRAFAC class translation factor GTPase superfamily. Classic translation factor GTPase family. LepA subfamily.

It localises to the cell membrane. The enzyme catalyses GTP + H2O = GDP + phosphate + H(+). Required for accurate and efficient protein synthesis under certain stress conditions. May act as a fidelity factor of the translation reaction, by catalyzing a one-codon backward translocation of tRNAs on improperly translocated ribosomes. Back-translocation proceeds from a post-translocation (POST) complex to a pre-translocation (PRE) complex, thus giving elongation factor G a second chance to translocate the tRNAs correctly. Binds to ribosomes in a GTP-dependent manner. The sequence is that of Elongation factor 4 from Alkaliphilus oremlandii (strain OhILAs) (Clostridium oremlandii (strain OhILAs)).